Consider the following 341-residue polypeptide: Cyclin-Y (341 aa).

A lipid anchor (N-myristoyl glycine) is attached at G2. Phosphoserine occurs at positions 21 and 25. The residue at position 30 (T30) is a Phosphothreonine. S33 bears the Phosphoserine mark. T37 bears the Phosphothreonine mark. Phosphothreonine; by CDK14 is present on T67. Residues S71 and S73 each carry the phosphoserine; by CDK14 modification. T75 carries the post-translational modification Phosphothreonine. Phosphoserine; by CDK14 is present on S83. A phosphoserine mark is found at S99, S100, and S102. The Cyclin N-terminal domain occupies 143–265; that stretch reads DIFDENLHPL…FLELLQFNIN (123 aa). Position 280 is a phosphoserine (S280). A phosphoserine; by CDK14 mark is found at S288 and S295. 2 positions are modified to phosphoserine: S324 and S326. T331 bears the Phosphothreonine mark.

Belongs to the cyclin family. Cyclin Y subfamily. As to quaternary structure, found in a complex with CAPRIN2, LRP6 and CDK14 during G2/M stage; CAPRIN2 functions as a scaffold for the complex by binding to CCNY via its N terminus and to CDK14 via its C terminus. Interacts with CDK14. Interacts with CDK16. Interacts with LRP6. Ubiquitinated; leading to its degradation. Post-translationally, heavily phosphorylated. Phosphorylation at Ser-71 and Ser-73 by CDK14 is enhanced during the G2 and M cell cycle phases, and creates a phosphodegron triggering SCF-dependent ubiquitination. As to expression, widely expressed.

The protein resides in the cell membrane. It is found in the nucleus. Functionally, positive regulatory subunit of the cyclin-dependent kinases CDK14/PFTK1 and CDK16. Acts as a cell-cycle regulator of Wnt signaling pathway during G2/M phase by recruiting CDK14/PFTK1 to the plasma membrane and promoting phosphorylation of LRP6, leading to the activation of the Wnt signaling pathway. Recruits CDK16 to the plasma membrane. Isoform 3 might play a role in the activation of MYC-mediated transcription. This is Cyclin-Y (CCNY) from Homo sapiens (Human).